A 931-amino-acid polypeptide reads, in one-letter code: Myocardin-related transcription factor A (931 aa).

The interval Met-1–Asp-256 is mediates interaction with SCAI and ACTB. Ser-6 carries the post-translational modification Phosphoserine. The intervening spacer sequence 1 stretch occupies residues Ser-6–Glu-23. One copy of the RPEL 1 repeat lies at Asp-24–Ser-49. The Bipartite Nuclear localization signal signature appears at Lys-27 to Arg-65. An intervening spacer sequence 2 region spans residues Ala-50–Ala-67. The stretch at Asp-68–Ser-93 is one RPEL 2 repeat. Disordered regions lie at residues Ala-110 to Asp-256 and Pro-290 to Pro-344. Phosphoserine occurs at positions 124, 139, and 156. A compositionally biased stretch (polar residues) spans Ser-151–Ser-162. The span at Pro-180–Pro-189 shows a compositional bias: pro residues. The segment covering Ser-191–Ser-215 has biased composition (polar residues). Basic and acidic residues predominate over residues Ala-216 to Pro-231. Thr-305 carries the phosphothreonine modification. Phosphoserine is present on residues Ser-310 and Ser-312. The span at Ser-310 to Ser-320 shows a compositional bias: low complexity. Position 313 is a phosphothreonine (Thr-313). Residues Ser-317, Ser-320, and Ser-333 each carry the phosphoserine modification. Positions Leu-347 to Gln-381 constitute an SAP domain. Residues Ser-385 and Ser-446 each carry the phosphoserine modification. The segment at Phe-444 to Phe-476 is disordered. Thr-447 carries the phosphothreonine modification. Ser-449 is modified (phosphoserine). A Phosphothreonine modification is found at Thr-450. At Ser-454 the chain carries Phosphoserine. Residue Thr-456 is modified to Phosphothreonine. The residue at position 458 (Ser-458) is a Phosphoserine. Over residues Glu-459–Gly-473 the composition is skewed to polar residues. Ser-482, Ser-492, Ser-507, and Ser-511 each carry phosphoserine. Residues Arg-515–Gln-563 adopt a coiled-coil conformation. Disordered stretches follow at residues Glu-558–Gln-577, Lys-674–Gln-746, and Ala-763–Asp-816. Residues Ser-678–Gly-694 show a composition bias toward low complexity. 3 positions are modified to phosphoserine: Ser-685, Ser-691, and Ser-695. The segment covering Met-732 to Gln-746 has biased composition (polar residues). A compositionally biased stretch (basic and acidic residues) spans Ala-763–Ser-778. A compositionally biased stretch (low complexity) spans Gly-784 to Gln-799. Residues Ser-792, Ser-807, and Ser-859 each carry the phosphoserine modification.

Interacts with SRF, forming the SRF-MRTFA nuclear complex which binds the 5'-CArG-3' consensus motif (CArG box) on DNA via SRF. Interacts (via RPEL repeats) with globular actin (G-actin), thereby regulating its subcellular location and activity of the complex formed with SRF. Either forms a trivalent (by binding three G-actin monomers) or pentavalent (by binding five G-actin monomers) complex with G-actin. Forms a nuclear ternary complex with SCAI and SRF, leading to suppress MRTFA-induced SRF transcriptional activity. Interacts with beta-actin (ACTB); interaction with ACTB prevents interaction with SCAI. Interacts with MRTFB. In terms of processing, phosphorylation at Ser-6 by Erk inhibits binding of globular actin (G-actin), unmasking the nuclear localization signal (NLS) and promoting nuclear import. As to expression, ubiquitously expressed, has been detected in lung, placenta, small intestine, liver, kidney, spleen, thymus, colon, muscle, heart and brain. Expressed in peripheral blood mononuclear cells (at protein level).

It localises to the cytoplasm. Its subcellular location is the nucleus. In terms of biological role, transcription coactivator that associates with the serum response factor (SRF) transcription factor to control expression of genes regulating the cytoskeleton during development, morphogenesis and cell migration. The SRF-MRTFA complex activity responds to Rho GTPase-induced changes in cellular globular actin (G-actin) concentration, thereby coupling cytoskeletal gene expression to cytoskeletal dynamics. MRTFA binds G-actin via its RPEL repeats, regulating activity of the MRTFA-SRF complex. Activity is also regulated by filamentous actin (F-actin) in the nucleus. The protein is Myocardin-related transcription factor A of Homo sapiens (Human).